The chain runs to 354 residues: Trans-L-3-hydroxyproline dehydratase (354 aa).

Cysteine 104 acts as the Proton acceptor in catalysis. Substrate-binding positions include 105-106 (GH), aspartate 269, and 274-275 (GS).

This sequence belongs to the proline racemase family. Homodimer.

The catalysed reaction is trans-3-hydroxy-L-proline = 1-pyrroline-2-carboxylate + H2O. Functionally, catalyzes the dehydration of trans-3-hydroxy-L-proline to delta-1-pyrroline-2-carboxylate (Pyr2C). The polypeptide is Trans-L-3-hydroxyproline dehydratase (L3hypdh) (Mus musculus (Mouse)).